We begin with the raw amino-acid sequence, 252 residues long: Trans-aconitate 2-methyltransferase (252 aa).

The protein belongs to the methyltransferase superfamily. Tam family.

It localises to the cytoplasm. It catalyses the reaction trans-aconitate + S-adenosyl-L-methionine = (E)-3-(methoxycarbonyl)pent-2-enedioate + S-adenosyl-L-homocysteine. Catalyzes the S-adenosylmethionine monomethyl esterification of trans-aconitate. In Escherichia coli (strain ATCC 8739 / DSM 1576 / NBRC 3972 / NCIMB 8545 / WDCM 00012 / Crooks), this protein is Trans-aconitate 2-methyltransferase.